The primary structure comprises 765 residues: Spastin (765 aa).

Residues 1 to 94 (MVRTKNQSSS…TSGYGPRGGT (94 aa)) are disordered. The Cytoplasmic portion of the chain corresponds to 1 to 107 (MVRTKNQSSS…KQNLYVVSFP (107 aa)). The segment at 1 to 195 (MVRTKNQSSS…ALLPLEMATN (195 aa)) is required for localization to punctate cytoplasmic foci. Low complexity predominate over residues 8 to 19 (SSSSSASSSTKS). Over residues 48–58 (SSKLSSNRQRA) the composition is skewed to polar residues. Over residues 59 to 72 (TITTTTTSTTPGSS) the composition is skewed to low complexity. Residues 108–128 (IIFLFNVLRSLIYQLFCIFRY) constitute an intramembrane region (helical). Over 129–765 (LYCASTKVIY…WSQDYGDITI (637 aa)) the chain is Cytoplasmic. The interval 193 to 765 (ATNRGGSGGY…WSQDYGDITI (573 aa)) is sufficient for interaction with microtubules and microtubule severing. In terms of domain architecture, MIT spans 218 to 293 (HRRAFEYISK…SMARDRLHFL (76 aa)). A disordered region spans residues 329–462 (QTNSKAAAVE…GSGSGASTPM (134 aa)). The span at 355–364 (SGTGSSAGTS) shows a compositional bias: low complexity. Composition is skewed to polar residues over residues 389–407 (NKSQ…STSV) and 428–444 (QFSS…RTPI). Residues 446-462 (NNAASGSGSGSGASTPM) form a required for interaction with microtubules region. 530-537 (GPPGNGKT) lines the ATP pocket.

It belongs to the AAA ATPase family. Spastin subfamily. In terms of assembly, homohexamer. The homohexamer is stabilized by ATP-binding. The homohexamer may adopt a ring conformation through which microtubules pass prior to being severed. Interacts with microtubules. Interacts with atl; may be involved in microtubule dynamics.

It localises to the membrane. Its subcellular location is the cytoplasm. The protein localises to the cytoskeleton. It is found in the microtubule organizing center. The protein resides in the centrosome. It localises to the chromosome. Its subcellular location is the lipid droplet. The catalysed reaction is n ATP + n H2O + a microtubule = n ADP + n phosphate + (n+1) alpha/beta tubulin heterodimers.. Its function is as follows. ATP-dependent microtubule severing protein. Stimulates microtubule minus-end depolymerization and poleward microtubule flux in the mitotic spindle. Regulates microtubule stability in the neuromuscular junction synapse. Involved in lipid metabolism by regulating the size and distribution of lipid droplets. Involved in axon regeneration by regulating microtubule severing. This chain is Spastin, found in Drosophila mojavensis (Fruit fly).